The sequence spans 120 residues: Immunoglobulin kappa variable 2-112 (120 aa).

A signal peptide spans 1 to 20; that stretch reads MRCSLQFLGVLMFWISGVSG. The segment at 21–43 is framework-1; the sequence is DIVITQDELSNPVTSGESVSISC. Cysteine 43 and cysteine 113 form a disulfide bridge. A complementarity-determining-1 region spans residues 44 to 59; that stretch reads RSSKSLLYKDGKTYLN. Residues 60–74 are framework-2; that stretch reads WFLQRPGQSPQLLIY. The segment at 75 to 81 is complementarity-determining-2; the sequence is LMSTRAS. A framework-3 region spans residues 82 to 113; it reads GVSDRFSGSGSGTDFTLEISRVKAEDVGVYYC. The interval 114–120 is complementarity-determining-3; that stretch reads QQLVEYP.

This is Immunoglobulin kappa variable 2-112 from Mus musculus (Mouse).